Reading from the N-terminus, the 730-residue chain is Procollagen-lysine,2-oxoglutarate 5-dioxygenase 1 (730 aa).

Residues 1-20 (MVPPAVLLPWVVLPLLGVQG) form the signal peptide. N-linked (GlcNAc...) asparagine glycans are attached at residues Asn200, Asn403, and Asn541. In terms of domain architecture, Fe2OG dioxygenase spans 639–730 (QFELAFVVRY…RYIAVSFIDP (92 aa)). His659 and Asp661 together coordinate Fe cation. A glycan (N-linked (GlcNAc...) asparagine) is linked at Asn689. His711 contacts Fe cation. Arg721 is a catalytic residue.

In terms of assembly, homodimer. The cofactor is Fe(2+). L-ascorbate is required as a cofactor.

It is found in the rough endoplasmic reticulum membrane. It catalyses the reaction L-lysyl-[collagen] + 2-oxoglutarate + O2 = (5R)-5-hydroxy-L-lysyl-[collagen] + succinate + CO2. Functionally, forms hydroxylysine residues in -Xaa-Lys-Gly- sequences in collagens. These hydroxylysines serve as sites of attachment for carbohydrate units and are essential for the stability of the intermolecular collagen cross-links. This chain is Procollagen-lysine,2-oxoglutarate 5-dioxygenase 1 (PLOD1), found in Gallus gallus (Chicken).